The primary structure comprises 700 residues: Elongation factor G (700 aa).

Residues 8–290 (ERYRNIGISA…AVVEFMPSPV (283 aa)) form the tr-type G domain. GTP is bound by residues 17-24 (AHIDAGKT), 88-92 (DTPGH), and 142-145 (NKMD).

This sequence belongs to the TRAFAC class translation factor GTPase superfamily. Classic translation factor GTPase family. EF-G/EF-2 subfamily.

It is found in the cytoplasm. In terms of biological role, catalyzes the GTP-dependent ribosomal translocation step during translation elongation. During this step, the ribosome changes from the pre-translocational (PRE) to the post-translocational (POST) state as the newly formed A-site-bound peptidyl-tRNA and P-site-bound deacylated tRNA move to the P and E sites, respectively. Catalyzes the coordinated movement of the two tRNA molecules, the mRNA and conformational changes in the ribosome. The polypeptide is Elongation factor G (Albidiferax ferrireducens (strain ATCC BAA-621 / DSM 15236 / T118) (Rhodoferax ferrireducens)).